The primary structure comprises 346 residues: Fructose-1,6-bisphosphatase class 1 (346 aa).

Mg(2+)-binding residues include Glu96, Asp119, Leu121, and Asp122. Residues 122–125, Asn214, Tyr247, and Lys277 contribute to the substrate site; that span reads DGSS. Glu283 contacts Mg(2+).

This sequence belongs to the FBPase class 1 family. As to quaternary structure, homotetramer. Mg(2+) serves as cofactor.

The protein resides in the cytoplasm. The enzyme catalyses beta-D-fructose 1,6-bisphosphate + H2O = beta-D-fructose 6-phosphate + phosphate. It participates in carbohydrate biosynthesis; gluconeogenesis. The chain is Fructose-1,6-bisphosphatase class 1 from Cytophaga hutchinsonii (strain ATCC 33406 / DSM 1761 / CIP 103989 / NBRC 15051 / NCIMB 9469 / D465).